We begin with the raw amino-acid sequence, 136 residues long: Histone H3-like 3 (136 aa).

Residues 1-15 are compositionally biased toward basic residues; it reads MARTKQTARKSHGGK. Residues 1–42 are disordered; the sequence is MARTKQTARKSHGGKAPRTLLATKAARKSAPTTGGVKKPHRY. N6,N6,N6-trimethyllysine; alternate occurs at positions 5 and 10. N6,N6-dimethyllysine; alternate occurs at positions 5 and 10. Lys5 and Lys10 each carry N6-methyllysine; alternate. Residue Lys10 is modified to N6-acetyllysine; alternate. Ser11 carries the post-translational modification Phosphoserine. At Lys15 the chain carries N6-acetyllysine. 2 positions are modified to N6-methyllysine; alternate: Lys24 and Lys28. Lys24 is modified (N6-acetyllysine; alternate). Lys28 carries the N6,N6,N6-trimethyllysine; alternate modification. Lys28 carries the post-translational modification N6,N6-dimethyllysine; alternate. The residue at position 29 (Ser29) is a Phosphoserine. An N6,N6,N6-trimethyllysine; alternate modification is found at Lys37. Lys37 is modified (N6,N6-dimethyllysine; alternate). An N6-methyllysine; alternate modification is found at Lys37.

This sequence belongs to the histone H3 family. As to quaternary structure, the nucleosome is a histone octamer containing two molecules each of H2A, H2B, H3 and H4 assembled in one H3-H4 heterotetramer and two H2A-H2B heterodimers. The octamer wraps approximately 147 bp of DNA. As to expression, expressed in roots, seedlings, leaves and open flowers.

Its subcellular location is the nucleus. It is found in the chromosome. Core component of nucleosome. Nucleosomes wrap and compact DNA into chromatin, limiting DNA accessibility to the cellular machineries which require DNA as a template. Histones thereby play a central role in transcription regulation, DNA repair, DNA replication and chromosomal stability. DNA accessibility is regulated via a complex set of post-translational modifications of histones, also called histone code, and nucleosome remodeling. This chain is Histone H3-like 3, found in Arabidopsis thaliana (Mouse-ear cress).